Reading from the N-terminus, the 386-residue chain is Pepsin A (386 aa).

An N-terminal signal peptide occupies residues 1 to 15 (MKWLLLISLVALSEC). Residues 16–60 (AIVKVPLVRKKSLRQNLIEHGLLNDFLKNQSPNPASKYFPQEPTV) constitute a propeptide, activation peptide. Residues 74-383 (YFGTIGIGTP…DRANNQVGLA (310 aa)) enclose the Peptidase A1 domain. The active site involves aspartate 92. Disulfide bonds link cysteine 105–cysteine 110 and cysteine 266–cysteine 270. The active site involves aspartate 275. Cysteine 309 and cysteine 342 are oxidised to a cystine.

This sequence belongs to the peptidase A1 family.

It is found in the secreted. The catalysed reaction is Preferential cleavage: hydrophobic, preferably aromatic, residues in P1 and P1' positions. Cleaves 1-Phe-|-Val-2, 4-Gln-|-His-5, 13-Glu-|-Ala-14, 14-Ala-|-Leu-15, 15-Leu-|-Tyr-16, 16-Tyr-|-Leu-17, 23-Gly-|-Phe-24, 24-Phe-|-Phe-25 and 25-Phe-|-Tyr-26 bonds in the B chain of insulin.. Its function is as follows. Shows particularly broad specificity; although bonds involving phenylalanine and leucine are preferred, many others are also cleaved to some extent. The polypeptide is Pepsin A (PGA) (Canis lupus familiaris (Dog)).